The following is a 258-amino-acid chain: Trans-aconitate 2-methyltransferase (258 aa).

Belongs to the methyltransferase superfamily. Tam family.

Its subcellular location is the cytoplasm. The enzyme catalyses trans-aconitate + S-adenosyl-L-methionine = (E)-3-(methoxycarbonyl)pent-2-enedioate + S-adenosyl-L-homocysteine. Functionally, catalyzes the S-adenosylmethionine monomethyl esterification of trans-aconitate. This Deinococcus radiodurans (strain ATCC 13939 / DSM 20539 / JCM 16871 / CCUG 27074 / LMG 4051 / NBRC 15346 / NCIMB 9279 / VKM B-1422 / R1) protein is Trans-aconitate 2-methyltransferase.